The following is a 415-amino-acid chain: Tyrosine--tRNA ligase (415 aa).

Tyr34 contributes to the L-tyrosine binding site. Positions 39 to 48 (PSADSLHLGN) match the 'HIGH' region motif. The L-tyrosine site is built by Tyr162 and Gln166. Positions 224 to 228 (KFGKS) match the 'KMSKS' region motif. Residue Lys227 participates in ATP binding. The region spanning 346-413 (IKIIDLLNLA…KRNYFLILWN (68 aa)) is the S4 RNA-binding domain.

The protein belongs to the class-I aminoacyl-tRNA synthetase family. TyrS type 1 subfamily. As to quaternary structure, homodimer.

Its subcellular location is the cytoplasm. It catalyses the reaction tRNA(Tyr) + L-tyrosine + ATP = L-tyrosyl-tRNA(Tyr) + AMP + diphosphate + H(+). Its function is as follows. Catalyzes the attachment of tyrosine to tRNA(Tyr) in a two-step reaction: tyrosine is first activated by ATP to form Tyr-AMP and then transferred to the acceptor end of tRNA(Tyr). This Ureaplasma parvum serovar 3 (strain ATCC 27815 / 27 / NCTC 11736) protein is Tyrosine--tRNA ligase.